The primary structure comprises 337 residues: Histidine N-acetyltransferase (337 aa).

Residues 1–2 constitute a propeptide, removed in mature form; the sequence is MK. In terms of domain architecture, N-acetyltransferase spans 21 to 157; that stretch reads LQFSVATEED…GILLMRFRAE (137 aa).

Expressed exclusively in the brain and lens.

The enzyme catalyses L-histidine + acetyl-CoA = N(alpha)-acetyl-L-histidine + CoA + H(+). Functionally, enzyme responsible for the N-acetyl-histidine (NAH) synthesis, which is a major constituent of brain and lens of ectothermic vertebrates. The chain is Histidine N-acetyltransferase (hisat) from Oreochromis niloticus (Nile tilapia).